Consider the following 252-residue polypeptide: MERVLIVNADDFGLSKGQNYGIVEAYRNGVVTSTTALVNGEAIDHAAQLSRELPALGVGMHFVLTLGKPVSEMPGLTRDGLLGKWIWQMAEEDTLPLDEIAHELACQYQRFIDVFGREPTHLDSHHHVHMFPQIFPIVAHFAAQRGIALRIDRQTVLNADDLPSDLRSTQGFSSEFYGEEITEACFLRILDASAHRGEASLEVMCHPAFVDNIIRQSAYCYPRLTELEVLTSASLKAAIAERGYRPGCFLDI.

Residues H61 and H125 each coordinate Mg(2+).

The protein belongs to the YdjC deacetylase family. ChbG subfamily. Homodimer. Requires Mg(2+) as cofactor.

The protein resides in the cytoplasm. It catalyses the reaction N,N'-diacetylchitobiose + H2O = N-acetyl-beta-D-glucosaminyl-(1-&gt;4)-D-glucosamine + acetate. The catalysed reaction is diacetylchitobiose-6'-phosphate + H2O = N'-monoacetylchitobiose-6'-phosphate + acetate. It functions in the pathway glycan degradation; chitin degradation. Functionally, involved in the degradation of chitin. ChbG is essential for growth on the acetylated chitooligosaccharides chitobiose and chitotriose but is dispensable for growth on cellobiose and chitosan dimer, the deacetylated form of chitobiose. Deacetylation of chitobiose-6-P and chitotriose-6-P is necessary for both the activation of the chb promoter by the regulatory protein ChbR and the hydrolysis of phosphorylated beta-glucosides by the phospho-beta-glucosidase ChbF. Catalyzes the removal of only one acetyl group from chitobiose-6-P to yield monoacetylchitobiose-6-P, the inducer of ChbR and the substrate of ChbF. The polypeptide is Chitooligosaccharide deacetylase (Salmonella enteritidis PT4 (strain P125109)).